We begin with the raw amino-acid sequence, 205 residues long: High frequency lysogenization protein HflD homolog (205 aa).

Belongs to the HflD family.

It localises to the cytoplasm. Its subcellular location is the cell inner membrane. This is High frequency lysogenization protein HflD homolog from Vibrio vulnificus (strain CMCP6).